A 56-amino-acid chain; its full sequence is UPF0434 protein Ecaj_0131 (56 aa).

Belongs to the UPF0434 family.

The protein is UPF0434 protein Ecaj_0131 of Ehrlichia canis (strain Jake).